A 622-amino-acid polypeptide reads, in one-letter code: UvrABC system protein C (622 aa).

The 80-residue stretch at 13–92 folds into the GIY-YIG domain; that stretch reads EKPGVYLMKN…IKKYRPKYNI (80 aa). One can recognise a UVR domain in the interval 204-239; that stretch reads KDILDKLKNQMEEASNSLQFEKAASLRDKIFAVKKI.

Belongs to the UvrC family. As to quaternary structure, interacts with UvrB in an incision complex.

It localises to the cytoplasm. Its function is as follows. The UvrABC repair system catalyzes the recognition and processing of DNA lesions. UvrC both incises the 5' and 3' sides of the lesion. The N-terminal half is responsible for the 3' incision and the C-terminal half is responsible for the 5' incision. The chain is UvrABC system protein C from Clostridium tetani (strain Massachusetts / E88).